We begin with the raw amino-acid sequence, 332 residues long: Serine, glycine, tyrosine and glutamine-rich protein (332 aa).

An N-terminal signal peptide occupies residues 1 to 17 (MMKTVLLLVVLVGVAYC). Residues 39–81 (SSSSSSSSSSGGGGSSGGGASGGGGGGGSSGGGGASGGGGGGS) form a disordered region. Residues 48 to 81 (SGGGGSSGGGASGGGGGGGSSGGGGASGGGGGGS) show a composition bias toward gly residues.

As to expression, prismatic layer of shell (at protein level). Expressed primarily in the mantle with highest level in the mantle edge and lower level in the mantle pallium.

The protein localises to the secreted. The polypeptide is Serine, glycine, tyrosine and glutamine-rich protein (Margaritifera margaritifera (Freshwater pearl mussel)).